Consider the following 434-residue polypeptide: GTPase Obg (434 aa).

In terms of domain architecture, Obg spans 1–158; the sequence is MFLDTAKIKV…RELQLELKIL (158 aa). Residues 159-336 enclose the OBG-type G domain; it reads ADVGLVGFPS…LLDATAELLD (178 aa). GTP is bound by residues 165–172, 190–194, 212–215, 282–285, and 317–319; these read GFPSVGKS, FTTIV, DLPG, NKMD, and SGL. Serine 172 and threonine 192 together coordinate Mg(2+). Positions 356–434 constitute an OCT domain; that stretch reads GFDEEEKAFE…IGKFEFEFVD (79 aa).

It belongs to the TRAFAC class OBG-HflX-like GTPase superfamily. OBG GTPase family. In terms of assembly, monomer. The cofactor is Mg(2+).

The protein localises to the cytoplasm. In terms of biological role, an essential GTPase which binds GTP, GDP and possibly (p)ppGpp with moderate affinity, with high nucleotide exchange rates and a fairly low GTP hydrolysis rate. Plays a role in control of the cell cycle, stress response, ribosome biogenesis and in those bacteria that undergo differentiation, in morphogenesis control. This chain is GTPase Obg, found in Streptococcus pneumoniae (strain ATCC 700669 / Spain 23F-1).